A 501-amino-acid chain; its full sequence is MFDNILEQQRIEKAKELKNLGINPYPHFLEKEMSLKTFKDKFSYILEQVEKRDESVNAVVAGRLKLLRIAGKSIFANIEDEDTNLQIYFNKDSVGEELYAILKKNLEVGDIVLVKGFPFVTKTGEFSLHASEVKLATKAIVPLPEKYHGLTDIEQRYRKRYVDMIMNAEVRKDFLVRSKVVSLIRHFFENKGFLEVETPMMHPIAGGANAKPFVTFHNSLGVERFLRIAPELYLKRLVVGGFEAVFEINRCFRNEGMDLTHNPEFTTIEFYWAYHNYKDLMDLTEELFALLLDKLNLGKTIEFDGKMIDFSKPFERITYKDALCKYGGLDRDLIEDKEKILTKLKVDGFEANEKLELGHLQAELFDNYVEEKLINPTFVIDFPISISPLSRRSDEDSQIAERFELFICGRELANGFNELNDPLDQYERFLKQIEAKNAGDEEACEMDEDFVNALGYGMPPTAGQGIGIDRLVMLLTNKKSIRDVILFPAMRPLKSELKEKE.

Positions 404 and 411 each coordinate Mg(2+).

This sequence belongs to the class-II aminoacyl-tRNA synthetase family. In terms of assembly, homodimer. Mg(2+) is required as a cofactor.

The protein resides in the cytoplasm. The catalysed reaction is tRNA(Lys) + L-lysine + ATP = L-lysyl-tRNA(Lys) + AMP + diphosphate. The protein is Lysine--tRNA ligase of Campylobacter jejuni subsp. jejuni serotype O:6 (strain 81116 / NCTC 11828).